We begin with the raw amino-acid sequence, 447 residues long: uncharacterized protein (447 aa).

Disordered stretches follow at residues 1–80 (MTFE…EQSS), 115–184 (ATTQ…PNNP), and 295–322 (LQDNASLTSQGSNLSSQNSGLSSSSSGI). Basic and acidic residues predominate over residues 11–32 (QRRDESAYRLGEEDGRQKGESS). The segment covering 42-51 (KNPSNVSFWS) has biased composition (polar residues). Residues 61–72 (VKTDRPQFHRAD) show a composition bias toward basic and acidic residues. The segment covering 115–158 (ATTQSSPISTSFNPQLPSNSNTNRFDFGSESQLSSNYTNDTGLS) has biased composition (polar residues). Over residues 300-321 (SLTSQGSNLSSQNSGLSSSSSG) the composition is skewed to low complexity. Transmembrane regions (helical) follow at residues 385–405 (FMFLFTFGIVFPPLWILASFL) and 424–444 (IINRVVACLGVAITFLFIGLG).

Its subcellular location is the membrane. This is an uncharacterized protein from Schizosaccharomyces pombe (strain 972 / ATCC 24843) (Fission yeast).